The following is a 481-amino-acid chain: tRNA-guanine(15) transglycosylase (481 aa).

The Nucleophile role is filled by Asp-87. Substrate is bound by residues Asp-122 and Ala-191. Zn(2+)-binding residues include Cys-273, Cys-275, and Cys-278.

It belongs to the archaeosine tRNA-ribosyltransferase family. Zn(2+) serves as cofactor.

The catalysed reaction is guanosine(15) in tRNA + 7-cyano-7-deazaguanine = 7-cyano-7-carbaguanosine(15) in tRNA + guanine. It functions in the pathway tRNA modification; archaeosine-tRNA biosynthesis. Its function is as follows. Exchanges the guanine residue with 7-cyano-7-deazaguanine (preQ0) at position 15 in the dihydrouridine loop (D-loop) of archaeal tRNAs. The chain is tRNA-guanine(15) transglycosylase from Archaeoglobus fulgidus (strain ATCC 49558 / DSM 4304 / JCM 9628 / NBRC 100126 / VC-16).